Here is a 36-residue protein sequence, read N- to C-terminus: U4-ctenitoxin-Pr1a (36 aa).

Cystine bridges form between cysteine 3/cysteine 17, cysteine 10/cysteine 22, and cysteine 16/cysteine 34.

In terms of tissue distribution, expressed by the venom gland.

Its subcellular location is the secreted. Functionally, neurotoxin. Causes spastic paralysis and death in mice. Moderate inhibitor of L-type calcium channels (Cav1/CACNA1). The polypeptide is U4-ctenitoxin-Pr1a (Phoneutria reidyi (Brazilian Amazonian armed spider)).